Consider the following 603-residue polypeptide: UvrABC system protein C (603 aa).

Positions 17–94 constitute a GIY-YIG domain; sequence TTSGCYKMLN…IKTHKPDYNV (78 aa).

This sequence belongs to the UvrC family. Interacts with UvrB in an incision complex.

It is found in the cytoplasm. Its function is as follows. The UvrABC repair system catalyzes the recognition and processing of DNA lesions. UvrC both incises the 5' and 3' sides of the lesion. The N-terminal half is responsible for the 3' incision and the C-terminal half is responsible for the 5' incision. The protein is UvrABC system protein C of Borreliella burgdorferi (strain ATCC 35210 / DSM 4680 / CIP 102532 / B31) (Borrelia burgdorferi).